Consider the following 120-residue polypeptide: Aspartate 1-decarboxylase (120 aa).

Serine 25 functions as the Schiff-base intermediate with substrate; via pyruvic acid in the catalytic mechanism. Serine 25 bears the Pyruvic acid (Ser) mark. Position 57 (threonine 57) interacts with substrate. Catalysis depends on tyrosine 58, which acts as the Proton donor. 73-75 (GAA) provides a ligand contact to substrate.

It belongs to the PanD family. In terms of assembly, heterooctamer of four alpha and four beta subunits. Requires pyruvate as cofactor. Is synthesized initially as an inactive proenzyme, which is activated by self-cleavage at a specific serine bond to produce a beta-subunit with a hydroxyl group at its C-terminus and an alpha-subunit with a pyruvoyl group at its N-terminus.

The protein resides in the cytoplasm. The catalysed reaction is L-aspartate + H(+) = beta-alanine + CO2. Its pathway is cofactor biosynthesis; (R)-pantothenate biosynthesis; beta-alanine from L-aspartate: step 1/1. Catalyzes the pyruvoyl-dependent decarboxylation of aspartate to produce beta-alanine. The polypeptide is Aspartate 1-decarboxylase (Polynucleobacter asymbioticus (strain DSM 18221 / CIP 109841 / QLW-P1DMWA-1) (Polynucleobacter necessarius subsp. asymbioticus)).